Reading from the N-terminus, the 209-residue chain is Uracil phosphoribosyltransferase (209 aa).

5-phospho-alpha-D-ribose 1-diphosphate-binding positions include Arg-78, Arg-103, and 130–138 (DPMFATGGT). Residues Ile-193 and 198–200 (GDA) each bind uracil. Asp-199 contributes to the 5-phospho-alpha-D-ribose 1-diphosphate binding site.

The protein belongs to the UPRTase family. It depends on Mg(2+) as a cofactor.

The catalysed reaction is UMP + diphosphate = 5-phospho-alpha-D-ribose 1-diphosphate + uracil. The protein operates within pyrimidine metabolism; UMP biosynthesis via salvage pathway; UMP from uracil: step 1/1. Allosterically activated by GTP. Catalyzes the conversion of uracil and 5-phospho-alpha-D-ribose 1-diphosphate (PRPP) to UMP and diphosphate. This Campylobacter fetus subsp. fetus (strain 82-40) protein is Uracil phosphoribosyltransferase.